The sequence spans 163 residues: NADH-quinone oxidoreductase subunit I (163 aa).

4Fe-4S ferredoxin-type domains are found at residues 53-83 (LRRYPNGEERCIACKLCEAICPAQAITIEAG) and 94-123 (VRYDIDMVKCIYCGFCQEACPVEAIVEGPN). [4Fe-4S] cluster is bound by residues cysteine 63, cysteine 66, cysteine 69, cysteine 73, cysteine 103, cysteine 106, cysteine 109, and cysteine 113.

This sequence belongs to the complex I 23 kDa subunit family. As to quaternary structure, NDH-1 is composed of 14 different subunits. Subunits NuoA, H, J, K, L, M, N constitute the membrane sector of the complex. [4Fe-4S] cluster serves as cofactor.

Its subcellular location is the cell inner membrane. The catalysed reaction is a quinone + NADH + 5 H(+)(in) = a quinol + NAD(+) + 4 H(+)(out). NDH-1 shuttles electrons from NADH, via FMN and iron-sulfur (Fe-S) centers, to quinones in the respiratory chain. The immediate electron acceptor for the enzyme in this species is believed to be ubiquinone. Couples the redox reaction to proton translocation (for every two electrons transferred, four hydrogen ions are translocated across the cytoplasmic membrane), and thus conserves the redox energy in a proton gradient. The polypeptide is NADH-quinone oxidoreductase subunit I (Bartonella bacilliformis (strain ATCC 35685 / KC583 / Herrer 020/F12,63)).